The following is a 730-amino-acid chain: Catalase-peroxidase (730 aa).

The segment at 1–25 (MEEKKCPVTGHTQHTPTGGGTKNKD) is disordered. The tryptophyl-tyrosyl-methioninium (Trp-Tyr) (with M-244) cross-link spans 95-218 (WHSAGTYRLN…LAAVQMGLIY (124 aa)). Histidine 96 (proton acceptor) is an active-site residue. The tryptophyl-tyrosyl-methioninium (Tyr-Met) (with W-95) cross-link spans 218-244 (YVNPEGPNGQPSVLASGRDVRDTFKRM). A heme b-binding site is contributed by histidine 259.

This sequence belongs to the peroxidase family. Peroxidase/catalase subfamily. Homodimer or homotetramer. Requires heme b as cofactor. Formation of the three residue Trp-Tyr-Met cross-link is important for the catalase, but not the peroxidase activity of the enzyme.

It catalyses the reaction H2O2 + AH2 = A + 2 H2O. The enzyme catalyses 2 H2O2 = O2 + 2 H2O. In terms of biological role, bifunctional enzyme with both catalase and broad-spectrum peroxidase activity. The polypeptide is Catalase-peroxidase (Desulfitobacterium hafniense (strain Y51)).